A 319-amino-acid polypeptide reads, in one-letter code: Zinc finger protein-like 1 homolog (319 aa).

Residues 1 to 43 form a B box-type; degenerate zinc finger; the sequence is MGLCKCPKRKVTNLFCYEHRVNVCEFCLVDNHPNCVVQSYLNW. An RING-type; atypical zinc finger spans residues 53-101; it reads CSLCHTTLTQGETIRLNCLHLLHWRCFDDWAASFPPTTAPAGYRCPCCS. Residues 212-232 are disordered; it reads ESSSDTRPLLRQDRDADNEEN. A compositionally biased stretch (basic and acidic residues) spans 219–232; it reads PLLRQDRDADNEEN. A helical transmembrane segment spans residues 264-284; it reads KMAIFVMFLALLALITIITVL.

Belongs to the ZFPL1 family.

The protein localises to the membrane. The polypeptide is Zinc finger protein-like 1 homolog (Caenorhabditis briggsae).